A 30-amino-acid polypeptide reads, in one-letter code: Kalata-B14 (30 aa).

Residues 1-30 constitute a cross-link (cyclopeptide (Gly-Asp)); the sequence is GLPVCGESCFGGTCNTPGCACDPWPVCTRD. Intrachain disulfides connect Cys5-Cys19, Cys9-Cys21, and Cys14-Cys27.

Post-translationally, this is a cyclic peptide.

Probably participates in a plant defense mechanism. The chain is Kalata-B14 from Oldenlandia affinis.